A 212-amino-acid chain; its full sequence is Bilin biosynthesis protein PecF (212 aa).

The protein belongs to the CpcE/RpcE/PecE family.

Functionally, an enzyme involved in the biosynthesis of bilin. The protein is Bilin biosynthesis protein PecF (pecF) of Mastigocladus laminosus (Fischerella sp.).